Here is a 62-residue protein sequence, read N- to C-terminus: MNEDDCKIRRGNAAELFSGIRHIAINILTNDKVFKAGLRRKMRKAAMDRNYLASVLAGSGLS.

This is an uncharacterized protein from Escherichia coli O157:H7.